A 1052-amino-acid polypeptide reads, in one-letter code: Focal adhesion kinase 1 (1052 aa).

The segment at 1 to 27 is disordered; it reads MAAAYLDPNLNHTPNSSTKTHLGTGME. Position 2 is an N-acetylalanine (Ala2). Tyr5 bears the Phosphotyrosine mark. The span at 10–21 shows a compositional bias: polar residues; that stretch reads LNHTPNSSTKTH. The residue at position 13 (Thr13) is a Phosphothreonine. 2 positions are modified to phosphoserine: Ser29 and Ser54. An FERM domain is found at 35–355; that stretch reads RVLKVFHYFE…GYCRLVNGTS (321 aa). A Glycyl lysine isopeptide (Lys-Gly) (interchain with G-Cter in SUMO) cross-link involves residue Lys152. The residue at position 397 (Tyr397) is a Phosphotyrosine; by autocatalysis. Position 407 is a phosphotyrosine (Tyr407). One can recognise a Protein kinase domain in the interval 422–680; that stretch reads IELGRCIGEG…ELKAQLSTIL (259 aa). ATP-binding positions include 428–434, Lys454, and 500–502; these read IGEGQFG and ELC. Asp546 (proton acceptor) is an active-site residue. Tyr570 carries the phosphotyrosine modification. Phosphotyrosine; by RET and SRC is present on residues Tyr576 and Tyr577. At Ser580 the chain carries Phosphoserine. The segment covering 684–697 has biased composition (basic and acidic residues); that stretch reads KAQQEERMRMESRR. 2 disordered regions span residues 684–734 and 839–922; these read KAQQ…PSPQ and LSRG…RSND. The interaction with TGFB1I1 stretch occupies residues 707-1052; sequence GSDEAPPKPS…LKMLGQTRPH (346 aa). Ser722 is modified (phosphoserine). Ser732 bears the Phosphoserine; by CDK5 mark. A compositionally biased stretch (basic and acidic residues) spans 839–849; sequence LSRGSIDREDG. Residue Ser843 is modified to Phosphoserine. Tyr861 is subject to Phosphotyrosine. The span at 869 to 880 shows a compositional bias: pro residues; the sequence is PAAPPKKPPRPG. A phosphoserine mark is found at Ser887 and Ser910. Positions 912–1052 are interaction with ARHGEF28; sequence PPTANLDRSN…LKMLGQTRPH (141 aa). A Phosphothreonine modification is found at Thr914. Tyr925 bears the Phosphotyrosine mark.

Belongs to the protein kinase superfamily. Tyr protein kinase family. FAK subfamily. In terms of assembly, interacts (via first Pro-rich region) with CAS family members (via SH3 domain), including BCAR1, BCAR3, and CASS4. Interacts with NEDD9 (via SH3 domain). Interacts with GIT1. Interacts with SORBS1. Interacts with ARHGEF28. Interacts with SHB. Part of a complex composed of THSD1, PTK2/FAK1, TLN1 and VCL. Interacts with PXN and TLN1. Interacts with STAT1. Interacts with DCC. Interacts with WASL. Interacts with ARHGEF7. Interacts with GRB2 and GRB7. Component of a complex that contains at least FER, CTTN and PTK2/FAK1. Interacts with BMX. Interacts with TGFB1I1. Interacts with STEAP4. Interacts with ZFYVE21. Interacts with ESR1. Interacts with PIK3R1 or PIK3R2. Interacts with SRC, FGR, FLT4 and RET. Interacts with EPHA2 in resting cells; activation of EPHA2 recruits PTPN11, leading to dephosphorylation of PTK2/FAK1 and dissociation of the complex. Interacts with EPHA1 (kinase activity-dependent). Interacts with CD4; this interaction requires the presence of HIV-1 gp120. Interacts with PIAS1. Interacts with ARHGAP26 and SHC1. Interacts with RB1CC1; this inhibits PTK2/FAK1 activity and activation of downstream signaling pathways. Interacts with P53/TP53 and MDM2. Interacts with LPXN (via LD motif 3). Interacts with MISP. Interacts with CIB1 isoform 2. Interacts with CD36. Interacts with EMP2; regulates PTK2 activation and localization. Interacts with DSCAM. Interacts with AMBRA1. Interacts (when tyrosine-phosphorylated) with tensin TNS1; the interaction is increased by phosphorylation of TNS1. In terms of processing, phosphorylated on tyrosine residues upon activation, e.g. upon integrin signaling. Tyr-397 is the major autophosphorylation site, but other kinases can also phosphorylate this residue. Phosphorylation at Tyr-397 promotes interaction with SRC and SRC family members, leading to phosphorylation at Tyr-576, Tyr-577 and at additional tyrosine residues. FGR promotes phosphorylation at Tyr-397 and Tyr-576. FER promotes phosphorylation at Tyr-577, Tyr-861 and Tyr-925, even when cells are not adherent. Tyr-397, Tyr-576 and Ser-722 are phosphorylated only when cells are adherent. Phosphorylation at Tyr-397 is important for interaction with BMX, PIK3R1 and SHC1. Phosphorylation at Tyr-925 is important for interaction with GRB2. Dephosphorylated by PTPN11; PTPN11 is recruited to PTK2 via EPHA2 (tyrosine phosphorylated). Microtubule-induced dephosphorylation at Tyr-397 is crucial for the induction of focal adhesion disassembly; this dephosphorylation could be catalyzed by PTPN11 and regulated by ZFYVE21. Phosphorylation on tyrosine residues is enhanced by NTN1. Sumoylated; this enhances autophosphorylation. As to expression, detected in B and T-lymphocytes. Isoform 1 and isoform 6 are detected in lung fibroblasts (at protein level). Ubiquitous. Expressed in epithelial cells (at protein level).

The protein resides in the cell junction. It is found in the focal adhesion. Its subcellular location is the cell membrane. It localises to the cytoplasm. The protein localises to the perinuclear region. The protein resides in the cell cortex. It is found in the cytoskeleton. Its subcellular location is the microtubule organizing center. It localises to the centrosome. The protein localises to the nucleus. The protein resides in the cilium basal body. The enzyme catalyses L-tyrosyl-[protein] + ATP = O-phospho-L-tyrosyl-[protein] + ADP + H(+). Subject to autoinhibition, mediated by interactions between the FERM domain and the kinase domain. Activated by autophosphorylation at Tyr-397. This promotes interaction with SRC and phosphorylation at Tyr-576 and Tyr-577 in the kinase activation loop. Phosphorylation at Tyr-576 and Tyr-577 is required for maximal kinase activity. Inhibited by TAC544, TAE226, PF-573,228 and PF-562,271. Non-receptor protein-tyrosine kinase that plays an essential role in regulating cell migration, adhesion, spreading, reorganization of the actin cytoskeleton, formation and disassembly of focal adhesions and cell protrusions, cell cycle progression, cell proliferation and apoptosis. Required for early embryonic development and placenta development. Required for embryonic angiogenesis, normal cardiomyocyte migration and proliferation, and normal heart development. Regulates axon growth and neuronal cell migration, axon branching and synapse formation; required for normal development of the nervous system. Plays a role in osteogenesis and differentiation of osteoblasts. Functions in integrin signal transduction, but also in signaling downstream of numerous growth factor receptors, G-protein coupled receptors (GPCR), EPHA2, netrin receptors and LDL receptors. Forms multisubunit signaling complexes with SRC and SRC family members upon activation; this leads to the phosphorylation of additional tyrosine residues, creating binding sites for scaffold proteins, effectors and substrates. Regulates numerous signaling pathways. Promotes activation of phosphatidylinositol 3-kinase and the AKT1 signaling cascade. Promotes activation of MAPK1/ERK2, MAPK3/ERK1 and the MAP kinase signaling cascade. Promotes localized and transient activation of guanine nucleotide exchange factors (GEFs) and GTPase-activating proteins (GAPs), and thereby modulates the activity of Rho family GTPases. Signaling via CAS family members mediates activation of RAC1. Phosphorylates NEDD9 following integrin stimulation. Recruits the ubiquitin ligase MDM2 to P53/TP53 in the nucleus, and thereby regulates P53/TP53 activity, P53/TP53 ubiquitination and proteasomal degradation. Phosphorylates SRC; this increases SRC kinase activity. Phosphorylates ACTN1, ARHGEF7, GRB7, RET and WASL. Promotes phosphorylation of PXN and STAT1; most likely PXN and STAT1 are phosphorylated by a SRC family kinase that is recruited to autophosphorylated PTK2/FAK1, rather than by PTK2/FAK1 itself. Promotes phosphorylation of BCAR1; GIT2 and SHC1; this requires both SRC and PTK2/FAK1. Promotes phosphorylation of BMX and PIK3R1. Isoform 6 (FRNK) does not contain a kinase domain and inhibits PTK2/FAK1 phosphorylation and signaling. Its enhanced expression can attenuate the nuclear accumulation of LPXN and limit its ability to enhance serum response factor (SRF)-dependent gene transcription. Functionally, isoform 6 (FRNK) does not contain a kinase domain and inhibits PTK2/FAK1 phosphorylation and signaling. Its enhanced expression can attenuate the nuclear accumulation of LPXN and limit its ability to enhance serum response factor (SRF)-dependent gene transcription. The polypeptide is Focal adhesion kinase 1 (Homo sapiens (Human)).